Here is a 305-residue protein sequence, read N- to C-terminus: uncharacterized protein (305 aa).

Basic residues predominate over residues 1-10 (MLWAQRKKRK). Residues 1 to 30 (MLWAQRKKRKATTETTEDKPAESHRPNDSW) are disordered. The segment covering 16 to 27 (TEDKPAESHRPN) has biased composition (basic and acidic residues). Serine 39 is subject to Phosphoserine. The segment covering 92–101 (QKISGTSVSK) has biased composition (polar residues). The tract at residues 92-114 (QKISGTSVSKEMQRESGKSPSME) is disordered. Position 158 is a phosphoserine (serine 158). A compositionally biased stretch (low complexity) spans 197–208 (SHHGNQSHQNHN). The segment at 197–305 (SHHGNQSHQN…VNRRNQIYDS (109 aa)) is disordered. 2 stretches are compositionally biased toward polar residues: residues 209-221 (TYPC…SRSV) and 231-244 (LSHQ…SHQN). Residues 247 to 293 (GHPSQQGHSSHSNQQGHLGLSSQQGHPSQSSHQSHQGQPGHPNHQSH) are compositionally biased toward low complexity. Positions 294 to 305 (SLVNRRNQIYDS) are enriched in polar residues.

This is an uncharacterized protein from Rattus norvegicus (Rat).